A 520-amino-acid polypeptide reads, in one-letter code: GMP synthase [glutamine-hydrolyzing] (520 aa).

The region spanning 12-205 (KIIVLDYGSQ…AISICGARGD (194 aa)) is the Glutamine amidotransferase type-1 domain. The active-site Nucleophile is the Cys-89. Active-site residues include His-179 and Glu-181. The 190-residue stretch at 206–395 (WSMDNFIDME…LGMPEEIVWR (190 aa)) folds into the GMPS ATP-PPase domain. An ATP-binding site is contributed by 233–239 (SGGVDSS).

In terms of assembly, homodimer.

It catalyses the reaction XMP + L-glutamine + ATP + H2O = GMP + L-glutamate + AMP + diphosphate + 2 H(+). Its pathway is purine metabolism; GMP biosynthesis; GMP from XMP (L-Gln route): step 1/1. Functionally, catalyzes the synthesis of GMP from XMP. This Streptococcus pyogenes serotype M6 (strain ATCC BAA-946 / MGAS10394) protein is GMP synthase [glutamine-hydrolyzing].